Reading from the N-terminus, the 312-residue chain is Methionyl-tRNA formyltransferase (312 aa).

A (6S)-5,6,7,8-tetrahydrofolate-binding site is contributed by 111 to 114 (SLLP).

The protein belongs to the Fmt family.

The catalysed reaction is L-methionyl-tRNA(fMet) + (6R)-10-formyltetrahydrofolate = N-formyl-L-methionyl-tRNA(fMet) + (6S)-5,6,7,8-tetrahydrofolate + H(+). Functionally, attaches a formyl group to the free amino group of methionyl-tRNA(fMet). The formyl group appears to play a dual role in the initiator identity of N-formylmethionyl-tRNA by promoting its recognition by IF2 and preventing the misappropriation of this tRNA by the elongation apparatus. This Rhodopseudomonas palustris (strain HaA2) protein is Methionyl-tRNA formyltransferase.